The chain runs to 93 residues: Small ribosomal subunit protein uS19 (93 aa).

It belongs to the universal ribosomal protein uS19 family.

In terms of biological role, protein S19 forms a complex with S13 that binds strongly to the 16S ribosomal RNA. This Mycobacterium leprae (strain TN) protein is Small ribosomal subunit protein uS19 (rpsS).